The following is a 208-amino-acid chain: UPF0323 lipoprotein HH_0014 (208 aa).

Residues 1 to 26 form the signal peptide; sequence MKHIHKIKNYAMVGGLGVMAVFALNA. Cysteine 27 carries the N-palmitoyl cysteine lipid modification. The S-diacylglycerol cysteine moiety is linked to residue cysteine 27. Residues 148 to 208 form a disordered region; it reads ANSQRNYKSP…TNRNTGSMGS (61 aa). Composition is skewed to low complexity over residues 169-185 and 193-208; these read SAKT…SGKS and SSQS…SMGS.

This sequence belongs to the UPF0323 family.

It is found in the cell membrane. The sequence is that of UPF0323 lipoprotein HH_0014 from Helicobacter hepaticus (strain ATCC 51449 / 3B1).